A 627-amino-acid chain; its full sequence is Pescadillo homolog (627 aa).

Residues 321-414 (RLRTLFKGLK…QLLPTNKYFI (94 aa)) enclose the BRCT domain. Disordered stretches follow at residues 436-471 (PEEK…AVDQ), 489-562 (YKKY…LQAR), and 596-627 (FEAG…KLGK). Residues Ser453 and Ser457 each carry the phosphoserine modification. Composition is skewed to acidic residues over residues 453–471 (SDDD…AVDQ) and 498–521 (VNED…EELD). Basic and acidic residues predominate over residues 522-533 (EQAKRLKEEKQK). The segment covering 540-549 (KVHKVNKRQL) has biased composition (basic residues). Basic and acidic residues-rich tracts occupy residues 550-559 (HKAEVDEHRL) and 596-605 (FEAGEKEARK). A compositionally biased stretch (low complexity) spans 616-627 (AAAAAKASKLGK).

The protein belongs to the pescadillo family.

It is found in the nucleus. The protein localises to the nucleolus. Its subcellular location is the nucleoplasm. In terms of biological role, required for maturation of ribosomal RNAs and formation of the large ribosomal subunit. The polypeptide is Pescadillo homolog (Drosophila ananassae (Fruit fly)).